Consider the following 95-residue polypeptide: Large ribosomal subunit protein bL21 (95 aa).

It belongs to the bacterial ribosomal protein bL21 family. In terms of assembly, part of the 50S ribosomal subunit. Contacts protein L20.

In terms of biological role, this protein binds to 23S rRNA in the presence of protein L20. In Rubrobacter xylanophilus (strain DSM 9941 / JCM 11954 / NBRC 16129 / PRD-1), this protein is Large ribosomal subunit protein bL21.